Here is a 95-residue protein sequence, read N- to C-terminus: ESAT-6-like protein EsxA (95 aa).

Belongs to the WXG100 family. ESAT-6 subfamily. In terms of assembly, forms a tight 1:1 complex with EsxB. An artificial EsxA-EsxB heterodimer interacts with EspA.

Its subcellular location is the secreted. In terms of biological role, an exported protein. Unlike its M.tuberculosis counterpart has poor pore forming ability in artificial liposomes, does not undergo conformational change at acidic pH. Mutation of 2 residues to those found in M.tuberculosis (25-TA-26 to IH) alters the properties of this protein so that it inserts into liposomes at acidic pH, forming pores, like its M.tuberculosis counterpart. The sequence is that of ESAT-6-like protein EsxA from Mycolicibacterium smegmatis (strain ATCC 700084 / mc(2)155) (Mycobacterium smegmatis).